We begin with the raw amino-acid sequence, 316 residues long: Transcription initiation factor IIB (316 aa).

The TFIIB-type zinc-finger motif lies at proline 11–glycine 42. Positions 15, 18, 34, and 37 each coordinate Zn(2+). Serine 70, serine 76, and serine 92 each carry phosphoserine. Tandem repeats lie at residues methionine 124–lysine 200 and phenylalanine 218–proline 294. DNA-binding residues include lysine 152, arginine 154, lysine 189, and lysine 196. Positions lysine 189–arginine 193 are core promoter DNA-binding. N6-acetyllysine; by autocatalysis is present on lysine 238. Residues leucine 244 to leucine 316 are necessary for TATA box-bound complex TBP formation. Arginine 248 contributes to the DNA binding site. Positions serine 249 to serine 252 are core promoter DNA-binding. 5 residues coordinate DNA: lysine 272, alanine 281, threonine 284, arginine 286, and arginine 290. The interval valine 283–arginine 286 is core promoter DNA-binding.

It belongs to the TFIIB family. Found in a ternary complex with TATA box-bound TBP. Part of a TFIID-containing RNA polymerase II pre-initiation complex (PIC) that is composed of TBP and at least GTF2A1, GTF2A2, GTF2E1, GTF2E2, GTF2F1, GTF2H2, GTF2H3, GTF2H4, GTF2H5, GTF2B, TCEA1, ERCC2, ERCC3, TAF1, TAF2, TAF3, TAF4, TAF5, TAF6, TAF7, TAF8, TAF9, TAF10, TAF11, TAF12 and TAF13. Associates with TFIID-TFIIA (DA complex) to form TFIID-TFIIA-TFIIB (DAB complex), which is then recognized by RNA polymerase II (Pol II). Found in a RNA polymerase II initiation complex. Interacts (via C-terminus) with TBP; this interaction with TATA box-bound TBP guides Pol II into the PIC. Interacts (via N-terminus) with Pol II. Interacts (via C-terminus) with SSU72; this interaction is inhibited by SYMPK. Interacts with NR2F1; this interaction is direct. Interacts with PGR. Interacts with ESR1. Interacts with GTF2F1 (via C-terminus and preferentially via acetylated form); this interaction prevents binding of GTF2B to GTF2F2. Interacts with GTF2F2 (via N-terminus); this interaction is inhibited in presence of GTF2F1. Interacts with the transcription elongation factor TCEA2. Interacts with HSF1 (via transactivation domain). Interacts with GPBP1. Acetylated. Autoacetylated; autoacetylation at Lys-238 stimulates transcription activation.

It localises to the nucleus. Its subcellular location is the chromosome. It catalyses the reaction L-lysyl-[protein] + acetyl-CoA = N(6)-acetyl-L-lysyl-[protein] + CoA + H(+). General transcription factor that plays a role in transcription initiation by RNA polymerase II (Pol II). Involved in the pre-initiation complex (PIC) formation and Pol II recruitment at promoter DNA. Together with the TATA box-bound TBP forms the core initiation complex and provides a bridge between TBP and the Pol II-TFIIF complex. Released from the PIC early following the onset of transcription during the initiation and elongation transition and reassociates with TBP during the next transcription cycle. Associates with chromatin to core promoter-specific regions. Binds to two distinct DNA core promoter consensus sequence elements in a TBP-independent manner; these IIB-recognition elements (BREs) are localized immediately upstream (BREu), 5'-[GC][GC][GA]CGCC-3', and downstream (BREd), 5'-[GA]T[TGA][TG][GT][TG][TG]-3', of the TATA box element. Modulates transcription start site selection. Also exhibits autoacetyltransferase activity that contributes to the activated transcription. This Pongo abelii (Sumatran orangutan) protein is Transcription initiation factor IIB.